A 321-amino-acid polypeptide reads, in one-letter code: Glucokinase (321 aa).

8–13 (GDVGGT) is an ATP binding site.

It belongs to the bacterial glucokinase family.

The protein resides in the cytoplasm. It catalyses the reaction D-glucose + ATP = D-glucose 6-phosphate + ADP + H(+). This is Glucokinase from Salmonella typhi.